We begin with the raw amino-acid sequence, 123 residues long: Snaclec GPIB-binding protein subunit beta (123 aa).

3 disulfides stabilise this stretch: C2-C13, C30-C119, and C96-C111. The 112-residue stretch at 9–120 (YGGHCYKLFK…CTRLQYFVCE (112 aa)) folds into the C-type lectin domain.

Belongs to the snaclec family. In terms of assembly, heterodimer of subunits alpha and beta; disulfide-linked. In terms of tissue distribution, expressed by the venom gland.

The protein resides in the secreted. Binds to platelet GPIb (subunit alpha) (GP1BA) and functions as a receptor blocker for vWF binding to GPIb. The platelet GPIb-binding site resides on the GPIB-BP subunit beta and not on the alpha subunit. At a final concentration of 104 nM totally abolishes vWF-dependent shear-induced platelet aggregation (SIPA) at a high shear stress, but had no effect on SIPA at a low shear stress. This Bothrops jararaca (Jararaca) protein is Snaclec GPIB-binding protein subunit beta.